We begin with the raw amino-acid sequence, 134 residues long: Ethylmalonyl-CoA/methylmalonyl-CoA epimerase (134 aa).

The VOC domain maps to 4-134 (RLNHVAIAVP…NGCLVELEQV (131 aa)). 3 residues coordinate Co(2+): His-7, His-79, and Glu-130. Glu-130 (proton donor/acceptor) is an active-site residue.

It belongs to the methylmalonyl-CoA epimerase family. Requires Co(2+) as cofactor. Mn(2+) serves as cofactor.

The catalysed reaction is (2R)-ethylmalonyl-CoA = (2S)-ethylmalonyl-CoA. It carries out the reaction (R)-methylmalonyl-CoA = (S)-methylmalonyl-CoA. Functionally, promiscuous isomerase that catalyzes epimerization of both ethylmalonyl-CoA and methylmalonyl-CoA. Has thus a dual role in the ethylmalonyl-CoA pathway for acetyl-CoA assimilation required for R.sphaeroides growth on acetate as sole carbon source. This chain is Ethylmalonyl-CoA/methylmalonyl-CoA epimerase, found in Cereibacter sphaeroides (strain ATCC 17023 / DSM 158 / JCM 6121 / CCUG 31486 / LMG 2827 / NBRC 12203 / NCIMB 8253 / ATH 2.4.1.) (Rhodobacter sphaeroides).